The primary structure comprises 149 residues: MKIINVKIIDNRIYKHFYLPKYATSGSAGLDLSACLDKPLTIYPGKTHLISTGIAIHISDTKIAGVILPRSGLGHKYGIVLGNLVGLIDSDYQGELIVSLWNRGPKKYIVYPGKRIAQLVFMPIIQVRFSIVKSFIPTERGPHGFGHSM.

Residues 70 to 72, Asn-83, and 87 to 89 contribute to the substrate site; these read RSG and LID.

This sequence belongs to the dUTPase family. Mg(2+) is required as a cofactor.

It catalyses the reaction dUTP + H2O = dUMP + diphosphate + H(+). The protein operates within pyrimidine metabolism; dUMP biosynthesis; dUMP from dCTP (dUTP route): step 2/2. Its function is as follows. This enzyme is involved in nucleotide metabolism: it produces dUMP, the immediate precursor of thymidine nucleotides and it decreases the intracellular concentration of dUTP so that uracil cannot be incorporated into DNA. This Blochmanniella pennsylvanica (strain BPEN) protein is Deoxyuridine 5'-triphosphate nucleotidohydrolase.